Here is a 291-residue protein sequence, read N- to C-terminus: Glycolipid transfer protein domain-containing protein 2 (291 aa).

N-linked (GlcNAc...) asparagine glycosylation is present at asparagine 276.

The protein belongs to the GLTP family.

The protein is Glycolipid transfer protein domain-containing protein 2 (GLTPD2) of Homo sapiens (Human).